The following is a 206-amino-acid chain: Ribosomal RNA small subunit methyltransferase G (206 aa).

S-adenosyl-L-methionine is bound by residues Gly74, Leu79, 125 to 126 (VE), and Arg140.

The protein belongs to the methyltransferase superfamily. RNA methyltransferase RsmG family.

It is found in the cytoplasm. The catalysed reaction is guanosine(527) in 16S rRNA + S-adenosyl-L-methionine = N(7)-methylguanosine(527) in 16S rRNA + S-adenosyl-L-homocysteine. Specifically methylates the N7 position of guanine in position 527 of 16S rRNA. The chain is Ribosomal RNA small subunit methyltransferase G from Shewanella amazonensis (strain ATCC BAA-1098 / SB2B).